Here is a 163-residue protein sequence, read N- to C-terminus: Large ribosomal subunit protein bL17 (163 aa).

The segment at K127–E163 is disordered. The segment covering E128 to A140 has biased composition (basic residues). Residues G145–E163 show a composition bias toward low complexity.

Belongs to the bacterial ribosomal protein bL17 family. As to quaternary structure, part of the 50S ribosomal subunit. Contacts protein L32.

The chain is Large ribosomal subunit protein bL17 from Flavobacterium johnsoniae (strain ATCC 17061 / DSM 2064 / JCM 8514 / BCRC 14874 / CCUG 350202 / NBRC 14942 / NCIMB 11054 / UW101) (Cytophaga johnsonae).